We begin with the raw amino-acid sequence, 125 residues long: Small ribosomal subunit protein uS12 (125 aa).

The disordered stretch occupies residues 1–28 (MPTINQLVRKGREKVKKKSKAPALEGNP). Over residues 9-20 (RKGREKVKKKSK) the composition is skewed to basic residues. At Asp-89 the chain carries 3-methylthioaspartic acid. The interval 104-125 (AAGVKDRKQSRSKYGTKRPKEK) is disordered. Residues 113–125 (SRSKYGTKRPKEK) show a composition bias toward basic residues.

The protein belongs to the universal ribosomal protein uS12 family. As to quaternary structure, part of the 30S ribosomal subunit. Contacts proteins S8 and S17. May interact with IF1 in the 30S initiation complex.

In terms of biological role, with S4 and S5 plays an important role in translational accuracy. Its function is as follows. Interacts with and stabilizes bases of the 16S rRNA that are involved in tRNA selection in the A site and with the mRNA backbone. Located at the interface of the 30S and 50S subunits, it traverses the body of the 30S subunit contacting proteins on the other side and probably holding the rRNA structure together. The combined cluster of proteins S8, S12 and S17 appears to hold together the shoulder and platform of the 30S subunit. In Persephonella marina (strain DSM 14350 / EX-H1), this protein is Small ribosomal subunit protein uS12.